Here is a 117-residue protein sequence, read N- to C-terminus: Large ribosomal subunit protein uL18 (117 aa).

It belongs to the universal ribosomal protein uL18 family. As to quaternary structure, part of the 50S ribosomal subunit; part of the 5S rRNA/L5/L18/L25 subcomplex. Contacts the 5S and 23S rRNAs.

In terms of biological role, this is one of the proteins that bind and probably mediate the attachment of the 5S RNA into the large ribosomal subunit, where it forms part of the central protuberance. This Photorhabdus laumondii subsp. laumondii (strain DSM 15139 / CIP 105565 / TT01) (Photorhabdus luminescens subsp. laumondii) protein is Large ribosomal subunit protein uL18.